The sequence spans 88 residues: MLTNADREQIIAQYQRGESDTGSPEVQVALLSARINDLQNHFKAHKADHHSRRGLIRMVNTRRKLLDYLKGKDLGRYTTLISQLGLRR.

The protein belongs to the universal ribosomal protein uS15 family. Part of the 30S ribosomal subunit. Forms a bridge to the 50S subunit in the 70S ribosome, contacting the 23S rRNA.

Functionally, one of the primary rRNA binding proteins, it binds directly to 16S rRNA where it helps nucleate assembly of the platform of the 30S subunit by binding and bridging several RNA helices of the 16S rRNA. Forms an intersubunit bridge (bridge B4) with the 23S rRNA of the 50S subunit in the ribosome. The polypeptide is Small ribosomal subunit protein uS15 (Psychrobacter cryohalolentis (strain ATCC BAA-1226 / DSM 17306 / VKM B-2378 / K5)).